Consider the following 145-residue polypeptide: Large ribosomal subunit protein eL32 (145 aa).

The protein belongs to the eukaryotic ribosomal protein eL32 family.

In Aeropyrum pernix (strain ATCC 700893 / DSM 11879 / JCM 9820 / NBRC 100138 / K1), this protein is Large ribosomal subunit protein eL32 (rpl32e).